The sequence spans 389 residues: Lipid-A-disaccharide synthase (389 aa).

Belongs to the LpxB family.

The enzyme catalyses a lipid X + a UDP-2-N,3-O-bis[(3R)-3-hydroxyacyl]-alpha-D-glucosamine = a lipid A disaccharide + UDP + H(+). Its pathway is bacterial outer membrane biogenesis; LPS lipid A biosynthesis. Its function is as follows. Condensation of UDP-2,3-diacylglucosamine and 2,3-diacylglucosamine-1-phosphate to form lipid A disaccharide, a precursor of lipid A, a phosphorylated glycolipid that anchors the lipopolysaccharide to the outer membrane of the cell. This chain is Lipid-A-disaccharide synthase, found in Burkholderia lata (strain ATCC 17760 / DSM 23089 / LMG 22485 / NCIMB 9086 / R18194 / 383).